The following is a 183-amino-acid chain: Putative 3-methyladenine DNA glycosylase (183 aa).

This sequence belongs to the DNA glycosylase MPG family.

The sequence is that of Putative 3-methyladenine DNA glycosylase from Rickettsia rickettsii (strain Iowa).